The primary structure comprises 428 residues: Probable glucose-6-phosphate isomerase (428 aa).

Glu-269 (proton donor) is an active-site residue. Residues His-290 and Lys-401 contribute to the active site.

The protein belongs to the GPI family.

The protein resides in the cytoplasm. It catalyses the reaction alpha-D-glucose 6-phosphate = beta-D-fructose 6-phosphate. The protein operates within carbohydrate biosynthesis; gluconeogenesis. Its pathway is carbohydrate degradation; glycolysis; D-glyceraldehyde 3-phosphate and glycerone phosphate from D-glucose: step 2/4. Catalyzes the reversible isomerization of glucose-6-phosphate to fructose-6-phosphate. The sequence is that of Probable glucose-6-phosphate isomerase from Natronomonas pharaonis (strain ATCC 35678 / DSM 2160 / CIP 103997 / JCM 8858 / NBRC 14720 / NCIMB 2260 / Gabara) (Halobacterium pharaonis).